Here is a 66-residue protein sequence, read N- to C-terminus: Heat-stable enterotoxin (66 aa).

Positions 1–19 (MKKIVFVLVLMLSSFGTFG) are cleaved as a signal peptide. The propeptide occupies 20-50 (QETASRQFGDAFSTPIAAEVNKKACDTELPP). Cystine bridges form between cysteine 54-cysteine 59, cysteine 55-cysteine 63, and cysteine 58-cysteine 66.

It belongs to the heat-stable enterotoxin family.

The protein localises to the secreted. Its function is as follows. Toxin which activates the particulate form of guanylate cyclase and increases cyclic GMP levels within the host intestinal epithelial cells. This chain is Heat-stable enterotoxin (yst), found in Yersinia kristensenii.